Consider the following 196-residue polypeptide: uncharacterized protein (196 aa).

It belongs to the NAD(P)H dehydrogenase (quinone) family.

This is an uncharacterized protein from Escherichia coli (strain K12).